Reading from the N-terminus, the 932-residue chain is Transcriptional regulatory protein DagR (932 aa).

Residues 111-343 (LIGYDRSLRD…LKSDIQFLCA (233 aa)) enclose the Sigma-54 factor interaction domain. Residues 141 to 148 (GPSGVGKT) and 210 to 219 (ADGGYLLLDE) contribute to the ATP site. The 106-residue stretch at 462–567 (RYGDQIEERV…KECRHYRQRI (106 aa)) folds into the PRD 1 domain. The residue at position 497 (histidine 497) is a Phosphohistidine. One can recognise a PTS EIIA type-4 domain in the interval 572–708 (DCGVILIAHG…PQQENGGKVL (137 aa)). Histidine 580 (tele-phosphohistidine intermediate) is an active-site residue. In terms of domain architecture, PRD 2 spans 835–932 (LNPQRILKEM…YFYIYELLYS (98 aa)). Histidine 870 bears the Phosphohistidine mark.

In terms of biological role, involved in the regulation of the catabolism of D-glucosaminate. The sequence is that of Transcriptional regulatory protein DagR (dgaR) from Salmonella typhimurium (strain 14028s / SGSC 2262).